A 104-amino-acid chain; its full sequence is Phosphoribosyl-ATP pyrophosphatase (104 aa).

Belongs to the PRA-PH family.

The protein localises to the cytoplasm. It catalyses the reaction 1-(5-phospho-beta-D-ribosyl)-ATP + H2O = 1-(5-phospho-beta-D-ribosyl)-5'-AMP + diphosphate + H(+). It participates in amino-acid biosynthesis; L-histidine biosynthesis; L-histidine from 5-phospho-alpha-D-ribose 1-diphosphate: step 2/9. The protein is Phosphoribosyl-ATP pyrophosphatase of Streptococcus thermophilus (strain ATCC BAA-491 / LMD-9).